A 475-amino-acid polypeptide reads, in one-letter code: Aspartyl/glutamyl-tRNA(Asn/Gln) amidotransferase subunit B (475 aa).

The protein belongs to the GatB/GatE family. GatB subfamily. As to quaternary structure, heterotrimer of A, B and C subunits.

It catalyses the reaction L-glutamyl-tRNA(Gln) + L-glutamine + ATP + H2O = L-glutaminyl-tRNA(Gln) + L-glutamate + ADP + phosphate + H(+). It carries out the reaction L-aspartyl-tRNA(Asn) + L-glutamine + ATP + H2O = L-asparaginyl-tRNA(Asn) + L-glutamate + ADP + phosphate + 2 H(+). Allows the formation of correctly charged Asn-tRNA(Asn) or Gln-tRNA(Gln) through the transamidation of misacylated Asp-tRNA(Asn) or Glu-tRNA(Gln) in organisms which lack either or both of asparaginyl-tRNA or glutaminyl-tRNA synthetases. The reaction takes place in the presence of glutamine and ATP through an activated phospho-Asp-tRNA(Asn) or phospho-Glu-tRNA(Gln). The polypeptide is Aspartyl/glutamyl-tRNA(Asn/Gln) amidotransferase subunit B (Agathobacter rectalis (strain ATCC 33656 / DSM 3377 / JCM 17463 / KCTC 5835 / VPI 0990) (Eubacterium rectale)).